Consider the following 198-residue polypeptide: Na(+)-translocating NADH-quinone reductase subunit E (198 aa).

Transmembrane regions (helical) follow at residues 11–31 (SIFI…FLAV), 39–59 (FGLG…NNLV), 77–97 (FLSF…LEMI), 110–130 (GIFL…SFMV), 140–160 (VVYG…LAGI), and 176–196 (LGIT…FSGV).

This sequence belongs to the NqrDE/RnfAE family. In terms of assembly, composed of six subunits; NqrA, NqrB, NqrC, NqrD, NqrE and NqrF.

It is found in the cell inner membrane. The enzyme catalyses a ubiquinone + n Na(+)(in) + NADH + H(+) = a ubiquinol + n Na(+)(out) + NAD(+). Functionally, NQR complex catalyzes the reduction of ubiquinone-1 to ubiquinol by two successive reactions, coupled with the transport of Na(+) ions from the cytoplasm to the periplasm. NqrA to NqrE are probably involved in the second step, the conversion of ubisemiquinone to ubiquinol. This is Na(+)-translocating NADH-quinone reductase subunit E from Aliivibrio fischeri (strain ATCC 700601 / ES114) (Vibrio fischeri).